The chain runs to 182 residues: Ribosome maturation factor RimM (182 aa).

Residues 103–182 (EGDYYWKDLM…SIEVDWDPGF (80 aa)) form the PRC barrel domain.

It belongs to the RimM family. Binds ribosomal protein uS19.

It is found in the cytoplasm. An accessory protein needed during the final step in the assembly of 30S ribosomal subunit, possibly for assembly of the head region. Essential for efficient processing of 16S rRNA. May be needed both before and after RbfA during the maturation of 16S rRNA. It has affinity for free ribosomal 30S subunits but not for 70S ribosomes. This Escherichia coli O139:H28 (strain E24377A / ETEC) protein is Ribosome maturation factor RimM.